The sequence spans 341 residues: Fructose-1,6-bisphosphatase, cytosolic (341 aa).

Mg(2+)-binding residues include glutamate 71, glutamate 100, aspartate 121, leucine 123, and aspartate 124. Substrate is bound by residues aspartate 124–phenylalanine 127, asparagine 215, tyrosine 247, tyrosine 267, and lysine 277. Glutamate 283 is a binding site for Mg(2+).

The protein belongs to the FBPase class 1 family. Mg(2+) serves as cofactor.

It is found in the cytoplasm. It carries out the reaction beta-D-fructose 1,6-bisphosphate + H2O = beta-D-fructose 6-phosphate + phosphate. The polypeptide is Fructose-1,6-bisphosphatase, cytosolic (Pisum sativum (Garden pea)).